A 148-amino-acid polypeptide reads, in one-letter code: 3-dehydroquinate dehydratase (148 aa).

Tyr-23 serves as the catalytic Proton acceptor. Substrate is bound by residues Asn-75, His-81, and Asp-88. His-101 functions as the Proton donor in the catalytic mechanism. Substrate-binding positions include 102 to 103 and Arg-112; that span reads LS.

It belongs to the type-II 3-dehydroquinase family. In terms of assembly, homododecamer.

It carries out the reaction 3-dehydroquinate = 3-dehydroshikimate + H2O. It participates in metabolic intermediate biosynthesis; chorismate biosynthesis; chorismate from D-erythrose 4-phosphate and phosphoenolpyruvate: step 3/7. Catalyzes a trans-dehydration via an enolate intermediate. This Xanthomonas oryzae pv. oryzae (strain MAFF 311018) protein is 3-dehydroquinate dehydratase.